A 388-amino-acid chain; its full sequence is Chorismate synthase (388 aa).

Residues arginine 39 and arginine 45 each contribute to the NADP(+) site. Residues 130–132, 251–252, glycine 296, 311–315, and arginine 337 each bind FMN; these read RSS, NA, and KPIPT.

Belongs to the chorismate synthase family. Homotetramer. FMNH2 serves as cofactor.

The enzyme catalyses 5-O-(1-carboxyvinyl)-3-phosphoshikimate = chorismate + phosphate. Its pathway is metabolic intermediate biosynthesis; chorismate biosynthesis; chorismate from D-erythrose 4-phosphate and phosphoenolpyruvate: step 7/7. In terms of biological role, catalyzes the anti-1,4-elimination of the C-3 phosphate and the C-6 proR hydrogen from 5-enolpyruvylshikimate-3-phosphate (EPSP) to yield chorismate, which is the branch point compound that serves as the starting substrate for the three terminal pathways of aromatic amino acid biosynthesis. This reaction introduces a second double bond into the aromatic ring system. The protein is Chorismate synthase of Streptococcus uberis (strain ATCC BAA-854 / 0140J).